Here is a 658-residue protein sequence, read N- to C-terminus: Probable rhamnogalacturonate lyase B (658 aa).

A signal peptide spans 1 to 19 (MRFAIPLGAACAWAGVALA). 10 N-linked (GlcNAc...) asparagine glycosylation sites follow: N110, N143, N239, N280, N522, N530, N564, N571, N592, and N633.

Belongs to the polysaccharide lyase 4 family.

It localises to the secreted. The catalysed reaction is Endotype eliminative cleavage of L-alpha-rhamnopyranosyl-(1-&gt;4)-alpha-D-galactopyranosyluronic acid bonds of rhamnogalacturonan I domains in ramified hairy regions of pectin leaving L-rhamnopyranose at the reducing end and 4-deoxy-4,5-unsaturated D-galactopyranosyluronic acid at the non-reducing end.. In terms of biological role, pectinolytic enzymes consist of four classes of enzymes: pectin lyase, polygalacturonase, pectin methylesterase and rhamnogalacturonase. Degrades the rhamnogalacturonan I (RG-I) backbone of pectin. The polypeptide is Probable rhamnogalacturonate lyase B (rglB) (Neosartorya fischeri (strain ATCC 1020 / DSM 3700 / CBS 544.65 / FGSC A1164 / JCM 1740 / NRRL 181 / WB 181) (Aspergillus fischerianus)).